A 307-amino-acid polypeptide reads, in one-letter code: Serine/threonine-protein phosphatase 4 catalytic subunit (307 aa).

Ala2 is modified (N-acetylalanine). Mn(2+) is bound by residues Asp54, His56, Asp82, and Asn114. His115 functions as the Proton donor in the catalytic mechanism. His164 and His238 together coordinate Mn(2+). Leu307 carries the post-translational modification Leucine methyl ester.

This sequence belongs to the PPP phosphatase family. PP-4 (PP-X) subfamily. In terms of assembly, serine/threonine-protein phosphatase 4 (PP4) occurs in different assemblies of the catalytic and one or more regulatory subunits. Component of the PP4 complexes PPP4C-PPP4R1, PPP4C-PPP4R2, PPP4C-PPP4R2-PPP4R3A, PPP4C-PPP4R2-PPP4R3B and PPP4C-PPP4R4. The PPP4C-PPP4R2 complex appears to be a tetramer composed of 2 molecules of PPP4C and 2 molecules of PPP4R2. Interacts with REL, NFKB1/p50 and RELA. Interacts with SMN1 and GEMIN4. Interacts with IRS4 (phosphorylated). Interacts with SMEK1/PPP4R3A; the interaction requires PP4R2. Interacts with HDAC3. Requires Mn(2+) as cofactor. Post-translationally, methylation at the C-terminal Leu-307 is critical for interactions with regulatory subunits and functions in DNA repair.

It localises to the cytoplasm. It is found in the nucleus. The protein resides in the cytoskeleton. Its subcellular location is the microtubule organizing center. The protein localises to the centrosome. It catalyses the reaction O-phospho-L-seryl-[protein] + H2O = L-seryl-[protein] + phosphate. The enzyme catalyses O-phospho-L-threonyl-[protein] + H2O = L-threonyl-[protein] + phosphate. Protein phosphatase that is involved in many processes such as microtubule organization at centrosomes, maturation of spliceosomal snRNPs, apoptosis, DNA repair, tumor necrosis factor (TNF)-alpha signaling, activation of c-Jun N-terminal kinase MAPK8, regulation of histone acetylation, DNA damage checkpoint signaling, NF-kappa-B activation and cell migration. The PPP4C-PPP4R1 PP4 complex may play a role in dephosphorylation and regulation of HDAC3. The PPP4C-PPP4R2-PPP4R3A PP4 complex specifically dephosphorylates H2AX phosphorylated on Ser-140 (gamma-H2AX) generated during DNA replication and required for DNA double strand break repair. Dephosphorylates NDEL1 at CDK1 phosphorylation sites and negatively regulates CDK1 activity in interphase. In response to DNA damage, catalyzes RPA2 dephosphorylation, an essential step for DNA repair since it allows the efficient RPA2-mediated recruitment of RAD51 to chromatin. The chain is Serine/threonine-protein phosphatase 4 catalytic subunit (PPP4C) from Homo sapiens (Human).